A 193-amino-acid chain; its full sequence is BH3-interacting domain death agonist (193 aa).

A BH3 motif is present at residues 87 to 101; that stretch reads IAAQLAEIGDQLDKQ.

Forms heterodimers either with the pro-apoptotic protein BAX or the anti-apoptotic protein Bcl-2.

Its subcellular location is the cytoplasm. The protein resides in the mitochondrion outer membrane. Functionally, induces caspases and apoptosis. Counters the protective effect of Bcl-2. The sequence is that of BH3-interacting domain death agonist (BID) from Gallus gallus (Chicken).